We begin with the raw amino-acid sequence, 307 residues long: Junctional adhesion molecule 2A (307 aa).

The signal sequence occupies residues 1-18 (MLVCVSLLILIHSVPVSP). In terms of domain architecture, Ig-like V-type spans 19-112 (VTVSSRNPKV…EVSAPSDSIS (94 aa)). Over 19–226 (VTVSSRNPKV…FQTHDLNVAA (208 aa)) the chain is Extracellular. 2 disulfide bridges follow: cysteine 40–cysteine 102 and cysteine 147–cysteine 197. Residues 126 to 225 (PQTPSCDVPS…TFQTHDLNVA (100 aa)) enclose the Ig-like C2-type domain. Residues 227-247 (VVSAVVLVCVILFLCAFGVCL) form a helical membrane-spanning segment. Topologically, residues 248-307 (AHRQGYFSRHRGRSFWIPHCHGVTHISSQNLNPSEHTQHSGYSHPPKEPQDFKHTQSFML) are cytoplasmic. Residues 278-288 (LNPSEHTQHSG) show a composition bias toward polar residues. Positions 278–307 (LNPSEHTQHSGYSHPPKEPQDFKHTQSFML) are disordered. Basic and acidic residues predominate over residues 292–301 (PPKEPQDFKH).

It belongs to the immunoglobulin superfamily.

The protein resides in the cell membrane. The protein localises to the cell junction. It is found in the tight junction. Its function is as follows. Junctional adhesion protein that mediates heterotypic cell-cell interactions to regulate different cellular processes. During myogenesis, it is involved in myocyte fusion through the binding of jam3b on neighboring myocytes. The sequence is that of Junctional adhesion molecule 2A (jam2a) from Danio rerio (Zebrafish).